The primary structure comprises 207 residues: Small ribosomal subunit protein uS10m (207 aa).

The N-terminal 14 residues, 1–14, are a transit peptide targeting the mitochondrion; the sequence is MNMFRQAVRSFVRY.

It belongs to the universal ribosomal protein uS10 family. As to quaternary structure, part of the mitochondrial small ribosomal subunit.

The protein localises to the mitochondrion. In terms of biological role, involved in mitochondrial genome encoded proteins translation. Involved in the binding of tRNA to the ribosomes. This Kluyveromyces lactis (strain ATCC 8585 / CBS 2359 / DSM 70799 / NBRC 1267 / NRRL Y-1140 / WM37) (Yeast) protein is Small ribosomal subunit protein uS10m (RSM10).